Reading from the N-terminus, the 736-residue chain is Epithelial splicing regulatory protein 2 (736 aa).

3 RRM domains span residues 224-301, 325-405, and 659-736; these read TVIR…KATG, MIIR…RSTA, and ALVR…ACCE.

This sequence belongs to the ESRP family.

Its subcellular location is the nucleus. In terms of biological role, mRNA splicing factor that regulates the formation of epithelial cell-specific isoforms. Specifically regulates the expression of FGFR2-IIIb, an epithelial cell-specific isoform of fgfr2. Acts by directly binding specific sequences in mRNAs. Binds the GU-rich sequence motifs in the ISE/ISS-3, a cis-element regulatory region present in the mRNA of fgfr2. The chain is Epithelial splicing regulatory protein 2 (esrp2) from Danio rerio (Zebrafish).